The primary structure comprises 343 residues: Probable long-chain-alcohol O-fatty-acyltransferase 2 (343 aa).

The next 8 membrane-spanning stretches (helical) occupy residues 7 to 27 (NLIKVWISALISISYCYYISS), 36 to 56 (LLSLLPIFIIFLLLPLFFSSV), 58 to 78 (FCVISGFFFTWLANFKLFLFA), 117 to 137 (PMSKWVLAFKLLIFSFLLHVY), 148 to 168 (FAFLALFTIHVYLEAELILVF), 235 to 255 (GMLATFIVSGLMHELIYFYVI), 260 to 280 (TWEVTCFFLLHGVVTCLEIAM), and 292 to 312 (AVSGLAITVFLLVTAGWLFYP).

The protein belongs to the wax synthase family.

Its subcellular location is the membrane. The enzyme catalyses a long chain fatty alcohol + a fatty acyl-CoA = a wax ester + CoA. Functionally, catalyzes the final step in the synthesis of long-chain linear esters (waxes). In Arabidopsis thaliana (Mouse-ear cress), this protein is Probable long-chain-alcohol O-fatty-acyltransferase 2 (AT2).